The following is a 1035-amino-acid chain: POM121-like protein 2 (1035 aa).

Disordered regions lie at residues 1 to 37 (MGSF…PLHQ), 177 to 213 (LFPE…PRPG), 286 to 343 (IKKE…LGYA), 415 to 508 (LGPL…QSTL), 754 to 791 (SPLG…QPAL), and 972 to 1035 (NTPV…AYKK). Over residues 27 to 37 (TKRRPPQPLHQ) the composition is skewed to basic residues. The span at 309-319 (GGSESSGQQNQ) shows a compositional bias: low complexity. Composition is skewed to polar residues over residues 320-330 (KIPQLPSSPEN), 420-431 (SPQSTGEATSVA), and 445-462 (GCSQ…SKPT). Residues 464 to 481 (TFILLTPTSPTLPVTDTT) show a composition bias toward low complexity. The segment covering 493 to 502 (PMPPDPPAPP) has biased composition (pro residues). Residues 1000 to 1016 (RGPFRSSASSFSIGAKS) are compositionally biased toward low complexity. The segment covering 1017–1035 (KTPKNREKGHSRRHHAYKK) has biased composition (basic residues).

The protein belongs to the POM121 family.

The chain is POM121-like protein 2 (POM121L2) from Homo sapiens (Human).